Consider the following 95-residue polypeptide: Fungal defensin plectasin (95 aa).

The signal sequence occupies residues 1–23; that stretch reads MQFTTILSIGITVFGLLNTGAFA. Residues 24 to 55 constitute a propeptide that is removed on maturation; the sequence is APQPVPEAYAVSDPEAHPDDFAGMDANQLQKR. 3 residues coordinate beta-D-GlcNAc-(1-&gt;4)-Mur2Ac(oyl-L-Ala-gamma-D-Glu-L-Lys-D-Ala-D-Ala)-di-trans,octa-cis-undecaprenyl diphosphate: Phe-57, Gly-58, and Cys-59. Intrachain disulfides connect Cys-59–Cys-85, Cys-70–Cys-92, and Cys-74–Cys-94. Positions 61 to 64 are binds to membrane interface; the sequence is GPWD. Beta-D-GlcNAc-(1-&gt;4)-Mur2Ac(oyl-L-Ala-gamma-D-Glu-L-Lys-D-Ala-D-Ala)-di-trans,octa-cis-undecaprenyl diphosphate is bound by residues Asp-67, His-73, Tyr-84, Ala-86, Gly-88, Cys-92, and Lys-93. The tract at residues 86 to 92 is binds to membrane interface; sequence AKGGFVC.

The protein belongs to the invertebrate defensin family. Type 2 subfamily.

The protein localises to the secreted. The protein resides in the host cell membrane. Its function is as follows. Antimicrobial peptide that potently acts against several species of Gram-positive bacteria. It selectively inhibits peptidoglycan biosynthesis through complex formation with the cell wall precursor lipid II (1:1 molar ratio) thus inhibiting cell wall synthesis. It does not disrupt cell membranes. Is especially active against numerous clinical isolates of S.pneumoniae, including all 90 different serotypes and isolates resistant to clinically used antibiotics. In vitro, shows considerable selectivity for bacteria over mammalian cells. The peptide synthesized in D-amino acids does not show antibacterial activity. In vitro, acts on voltage-gated potassium channels by moderately inhibiting mammalian Kv1.3/KCNA3 (IC(50)=2.8 uM), and moderately inhibiting others potassium channels. The chain is Fungal defensin plectasin (DEF) from Pseudoplectania nigrella (Ebony cup).